Here is a 155-residue protein sequence, read N- to C-terminus: 2-C-methyl-D-erythritol 2,4-cyclodiphosphate synthase (155 aa).

A divalent metal cation is bound by residues Asp8 and His10. Residues 8–10 (DVH) and 34–35 (HS) each bind 4-CDP-2-C-methyl-D-erythritol 2-phosphate. His42 contributes to the a divalent metal cation binding site. Residues 56–58 (DIG), 61–65 (FPDSD), 132–135 (TTEE), Phe139, and Arg142 contribute to the 4-CDP-2-C-methyl-D-erythritol 2-phosphate site.

The protein belongs to the IspF family. In terms of assembly, homotrimer. It depends on a divalent metal cation as a cofactor.

It carries out the reaction 4-CDP-2-C-methyl-D-erythritol 2-phosphate = 2-C-methyl-D-erythritol 2,4-cyclic diphosphate + CMP. The protein operates within isoprenoid biosynthesis; isopentenyl diphosphate biosynthesis via DXP pathway; isopentenyl diphosphate from 1-deoxy-D-xylulose 5-phosphate: step 4/6. Its function is as follows. Involved in the biosynthesis of isopentenyl diphosphate (IPP) and dimethylallyl diphosphate (DMAPP), two major building blocks of isoprenoid compounds. Catalyzes the conversion of 4-diphosphocytidyl-2-C-methyl-D-erythritol 2-phosphate (CDP-ME2P) to 2-C-methyl-D-erythritol 2,4-cyclodiphosphate (ME-CPP) with a corresponding release of cytidine 5-monophosphate (CMP). The sequence is that of 2-C-methyl-D-erythritol 2,4-cyclodiphosphate synthase from Clostridium acetobutylicum (strain ATCC 824 / DSM 792 / JCM 1419 / IAM 19013 / LMG 5710 / NBRC 13948 / NRRL B-527 / VKM B-1787 / 2291 / W).